The sequence spans 444 residues: MSASTMTPGEIVSELDKYIIGQNRAKRAVAVALRNRWRRQQVEEPLRHEIHPKNILMIGPTGVGKTEIARRLAKLANAPFIKIEATKFTEVGYVGRDVDTIIRDLTEYSIKQTRELEMRRVRTQAEDAAEDRILDALVPPSRGTSGEPERGEDSNARQTFRKRLREGKCDDLEIEIEIAQPVPQMDVMTPPGMEEMAEQLRGMFAGLARDKKKPKKMKVKEAFKLIVEEEAAKRINEDDLRTAAIANVEQNGIVFLDEIDKIAARQESGGADVSRQGVQRDLLPLVEGTTVNTRYGMVRTDHILFIASGAFHLSRPSDLIPELQGRFPIRVELESLTAQDFVRILSDTDASLIKQYSALLGTEDVQLDFKPDGIERLAELAFSVNERTENIGARRLYTVMEKLLEELSFDATASSGKTITIDAAYVDAQLSEAASSQDLARYVL.

ATP is bound by residues isoleucine 20 and 62–67; that span reads GVGKTE. Positions 137-162 are disordered; sequence LVPPSRGTSGEPERGEDSNARQTFRK. The ATP site is built by aspartate 257, glutamate 322, and arginine 394.

It belongs to the ClpX chaperone family. HslU subfamily. A double ring-shaped homohexamer of HslV is capped on each side by a ring-shaped HslU homohexamer. The assembly of the HslU/HslV complex is dependent on binding of ATP.

It localises to the cytoplasm. Functionally, ATPase subunit of a proteasome-like degradation complex; this subunit has chaperone activity. The binding of ATP and its subsequent hydrolysis by HslU are essential for unfolding of protein substrates subsequently hydrolyzed by HslV. HslU recognizes the N-terminal part of its protein substrates and unfolds these before they are guided to HslV for hydrolysis. This chain is ATP-dependent protease ATPase subunit HslU, found in Bordetella petrii (strain ATCC BAA-461 / DSM 12804 / CCUG 43448).